Consider the following 246-residue polypeptide: UDP-N-acetyl-D-mannosaminuronic acid transferase (246 aa).

This sequence belongs to the glycosyltransferase 26 family.

The catalysed reaction is UDP-N-acetyl-alpha-D-mannosaminouronate + N-acetyl-alpha-D-glucosaminyl-di-trans,octa-cis-undecaprenyl diphosphate = beta-D-ManNAcA-(1-&gt;4)-alpha-D-GlcNAc-di-trans,octa-cis-undecaprenyl diphosphate + UDP + H(+). It participates in bacterial outer membrane biogenesis; enterobacterial common antigen biosynthesis. Functionally, catalyzes the synthesis of Und-PP-GlcNAc-ManNAcA (Lipid II), the second lipid-linked intermediate involved in enterobacterial common antigen (ECA) synthesis. The protein is UDP-N-acetyl-D-mannosaminuronic acid transferase of Salmonella schwarzengrund (strain CVM19633).